The primary structure comprises 510 residues: tRNA-2-methylthio-N(6)-dimethylallyladenosine synthase (510 aa).

The region spanning Arg19–His144 is the MTTase N-terminal domain. The [4Fe-4S] cluster site is built by Cys28, Cys73, Cys107, Cys181, Cys185, and Cys188. The Radical SAM core domain occupies Arg167–Glu397. The 71-residue stretch at Gln400–Ser470 folds into the TRAM domain. Basic and acidic residues predominate over residues Ala482–Pro492. The segment at Ala482–Ala510 is disordered.

This sequence belongs to the methylthiotransferase family. MiaB subfamily. Monomer. [4Fe-4S] cluster serves as cofactor.

It localises to the cytoplasm. It catalyses the reaction N(6)-dimethylallyladenosine(37) in tRNA + (sulfur carrier)-SH + AH2 + 2 S-adenosyl-L-methionine = 2-methylsulfanyl-N(6)-dimethylallyladenosine(37) in tRNA + (sulfur carrier)-H + 5'-deoxyadenosine + L-methionine + A + S-adenosyl-L-homocysteine + 2 H(+). Its function is as follows. Catalyzes the methylthiolation of N6-(dimethylallyl)adenosine (i(6)A), leading to the formation of 2-methylthio-N6-(dimethylallyl)adenosine (ms(2)i(6)A) at position 37 in tRNAs that read codons beginning with uridine. The sequence is that of tRNA-2-methylthio-N(6)-dimethylallyladenosine synthase from Kineococcus radiotolerans (strain ATCC BAA-149 / DSM 14245 / SRS30216).